The sequence spans 276 residues: Large ribosomal subunit protein uL2 (276 aa).

The interval 224–276 is disordered; it reads AMNPIDHPHGGGEGKTSGGRNPVTPWGVPTKGKKTRKRNKSSNKYIKRVSDKG. A compositionally biased stretch (basic residues) spans 254–270; sequence KGKKTRKRNKSSNKYIK.

Belongs to the universal ribosomal protein uL2 family. In terms of assembly, part of the 50S ribosomal subunit. Forms a bridge to the 30S subunit in the 70S ribosome.

Functionally, one of the primary rRNA binding proteins. Required for association of the 30S and 50S subunits to form the 70S ribosome, for tRNA binding and peptide bond formation. It has been suggested to have peptidyltransferase activity; this is somewhat controversial. Makes several contacts with the 16S rRNA in the 70S ribosome. The sequence is that of Large ribosomal subunit protein uL2 from Ehrlichia chaffeensis (strain ATCC CRL-10679 / Arkansas).